Consider the following 520-residue polypeptide: Cytochrome b5 reductase 4 (520 aa).

Met1 bears the N-acetylmethionine mark. The segment covering 1 to 16 (MLNVPSQSFPGPSSQQ) has biased composition (low complexity). A disordered region spans residues 1-27 (MLNVPSQSFPGPSSQQRVASGGRSKVP). Residues 54–130 (LIEVTEEELK…LKECLVGRMA (77 aa)) form the Cytochrome b5 heme-binding domain. Residues His89 and His112 each coordinate heme. The region spanning 164 to 255 (PSSPSYDWFQ…KENTSWKCLG (92 aa)) is the CS domain. The region spanning 272–384 (LFYRKCQLVS…SNPEGNFIIS (113 aa)) is the FAD-binding FR-type domain. Residues 364–379 (DQLQIGDYVSVSNPEG) and 391–423 (DLFLLAAGTGFTPMVKVLNYALTNIPSLRKVKL) contribute to the FAD site.

It belongs to the flavoprotein pyridine nucleotide cytochrome reductase family. The cofactor is FAD.

Its subcellular location is the endoplasmic reticulum. The enzyme catalyses 2 Fe(III)-[cytochrome b5] + NADH = 2 Fe(II)-[cytochrome b5] + NAD(+) + H(+). In terms of biological role, NADH-cytochrome b5 reductase involved in endoplasmic reticulum stress response pathway. Plays a critical role in protecting pancreatic beta-cells against oxidant stress, possibly by protecting the cell from excess buildup of reactive oxygen species (ROS). This is Cytochrome b5 reductase 4 (CYB5R4) from Bos taurus (Bovine).